Consider the following 86-residue polypeptide: Large ribosomal subunit protein uL23 (86 aa).

Belongs to the universal ribosomal protein uL23 family. In terms of assembly, part of the 50S ribosomal subunit. Contacts protein L29.

In terms of biological role, binds to 23S rRNA. One of the proteins that surrounds the polypeptide exit tunnel on the outside of the ribosome. This Methanococcus maripaludis (strain C7 / ATCC BAA-1331) protein is Large ribosomal subunit protein uL23.